Consider the following 496-residue polypeptide: Autophagy-related protein 21 (496 aa).

The tract at residues 41-86 (SKKKTSNNNGSASNSESRNNEESILITNGSRDRTDAEEEEDNEDNA) is disordered. The segment covering 46–57 (SNNNGSASNSES) has biased composition (low complexity). A compositionally biased stretch (acidic residues) spans 75 to 84 (DAEEEEDNED). Position 213 is a phosphothreonine (T213). S237 carries the phosphoserine modification. WD repeat units lie at residues 294–334 (VHKG…DYMS), 346–385 (TRLC…NSLP), and 448–488 (VNES…GECV). Residues 342–346 (FRRGT) carry the L/FRRG motif motif.

This sequence belongs to the WD repeat PROPPIN family.

The protein localises to the cytoplasm. It is found in the vacuole. In terms of biological role, required for cytoplasm to vacuole transport (Cvt) vesicles formation and mitophagy. Involved in binding of phosphatidylethanolamine to ATG8 and in recruitment of ATG8 and ATG5 to the pre-autophagosomal structure. Protects ATG8 from ARG4-mediated cleavage. Essential for maturation of proaminopeptidase I. This chain is Autophagy-related protein 21 (ATG21), found in Saccharomyces cerevisiae (strain ATCC 204508 / S288c) (Baker's yeast).